We begin with the raw amino-acid sequence, 408 residues long: RNA exonuclease 4 (408 aa).

Residues 27–70 (TKEKDVSNSKAHNSRSSQSPSSSLRSSSRIQRKSKHSQGVGQYM) are disordered. Over residues 40-55 (SRSSQSPSSSLRSSSR) the composition is skewed to low complexity. Residues 131–292 (QYLAIDCEMV…YRLHKKEWER (162 aa)) form the Exonuclease domain. A compositionally biased stretch (basic and acidic residues) spans 310–322 (PEHVLGKRGHDEK). A disordered region spans residues 310–408 (PEHVLGKRGH…GESWWEQPAA (99 aa)). Residues 343 to 357 (GNGGGRQQFPGGGRK) show a composition bias toward gly residues. Over residues 372-384 (QRVDENGRGDGTS) the composition is skewed to basic and acidic residues.

This sequence belongs to the REXO4 family.

The protein resides in the nucleus. In terms of biological role, exoribonuclease involved in ribosome biosynthesis. Involved in the processing of ITS1, the internal transcribed spacer localized between the 18S and 5.8S rRNAs. The protein is RNA exonuclease 4 (REX4) of Cryptococcus neoformans var. neoformans serotype D (strain B-3501A) (Filobasidiella neoformans).